The primary structure comprises 268 residues: Embryonic abundant protein USP92 (268 aa).

The N-terminal stretch at 1–22 is a signal peptide; it reads MEFAHLTVLSLFCLAFVGITAT. A run of 5 repeats spans residues 50-55, 83-88, 101-106, 166-183, and 202-222. The interval 50–106 is 3 X 6 AA approximate repeats; that stretch reads GKTNSLPIKSEELKQYSTLFFEHDLHPRKNFILGNTNSVGSIIRPFTKSRQGVTDSI. The region spanning 68–259 is the BURP domain; sequence LFFEHDLHPR…GNKAAAWVPN (192 aa). Residues 166-222 are 2 X approximate repeats; that stretch reads YVVEDVKKVGDNAVMCHRLNFEKVVFNCHQVRETTAYVVSLVASDGTKTKALTVCHH. N-linked (GlcNAc...) asparagine glycosylation is present at N259.

In terms of tissue distribution, seed.

This is Embryonic abundant protein USP92 from Vicia faba (Broad bean).